The primary structure comprises 475 residues: MVKGNVIVVSNRIPVTIKKTEDDENGKSRYDYTMSSGGLVTALQGLKNPFRWFGWPGMSVDSEQGRQTVERDLKEKFNCYPIWLSDEIADLHYNGFSNSILWPLFHYHPGEMNFDEIAWAAYLEANKLFCQTILKEIKDGDVIWVHDYHLMLLPSLLRDQLNSKGLPNVKIGFFLHTPFPSSEIYRILPVRKEILEGVLSCDLIGFHTYDYVRHFLSSVERILKLRTSPQGVVYNDRQVTVSAYPIGIDVDKFLNGLKTDEVKSRIKQLETRFGKDCKLIIGVDRLDYIKGVPQKLHAFEIFLERHPEWIGKVVLIQVAVPSRGDVEEYQSLRAAVNELVGRINGRFGTVEFVPIHFLHKSVNFQELISVYAASDVCVVSSTRDGMNLVSYEYIACQQDRKGSLVLSEFAGAAQSLNGALVVNPWNTEELSEAIYEGLIMSEEKRRGNFQKMFKYIEKYTASYWGENFVKELTRV.

The D-glucose 6-phosphate site is built by Y93 and D147. 2 residues coordinate UDP: R285 and K290. Residues R285 and K290 each coordinate UDP-alpha-D-glucose. R323 is a binding site for D-glucose 6-phosphate. Residue 384–392 (DGMNLVSYE) participates in UDP-alpha-D-glucose binding. 388-392 (LVSYE) is a binding site for UDP.

It belongs to the glycosyltransferase 20 family.

The enzyme catalyses D-glucose 6-phosphate + UDP-alpha-D-glucose = alpha,alpha-trehalose 6-phosphate + UDP + H(+). It participates in carbohydrate biosynthesis. Functionally, synthase catalytic subunit of the trehalose synthase complex that catalyzes the production of trehalose from glucose-6-phosphate and UDP-alpha-D-glucose in a two step process. This Pichia angusta (Yeast) protein is Alpha,alpha-trehalose-phosphate synthase [UDP-forming].